A 461-amino-acid chain; its full sequence is Ornithine decarboxylase (461 aa).

K69 carries the N6-(pyridoxal phosphate)lysine modification. Residues S200, G237, and 274–277 (EPGR) contribute to the pyridoxal 5'-phosphate site. S303 carries the post-translational modification Phosphoserine; by CK2. Substrate is bound at residue 331-332 (YD). The Proton donor; shared with dimeric partner role is filled by C360. C360 is modified (S-nitrosocysteine). D361 is a binding site for substrate. Y389 contacts pyridoxal 5'-phosphate.

Belongs to the Orn/Lys/Arg decarboxylase class-II family. Homodimer. Only the dimer is catalytically active, as the active sites are constructed of residues from both monomers. Does not form a heterodimer with AZIN2. It depends on pyridoxal 5'-phosphate as a cofactor. In terms of tissue distribution, expressed during testis development in the outer part of the seminiferous tubules.

The enzyme catalyses L-ornithine + H(+) = putrescine + CO2. Its pathway is amine and polyamine biosynthesis; putrescine biosynthesis via L-ornithine pathway; putrescine from L-ornithine: step 1/1. Inhibited by antizymes (AZs) OAZ1, OAZ2 and OAZ3 in response to polyamine levels. AZs inhibit the assembly of the functional homodimer by binding to ODC monomers. Additionally, OAZ1 targets ODC monomers for ubiquitin-independent proteolytic destruction by the 26S proteasome. In terms of biological role, catalyzes the first and rate-limiting step of polyamine biosynthesis that converts ornithine into putrescine, which is the precursor for the polyamines, spermidine and spermine. Polyamines are essential for cell proliferation and are implicated in cellular processes, ranging from DNA replication to apoptosis. This Mus musculus (Mouse) protein is Ornithine decarboxylase (Odc1).